Reading from the N-terminus, the 411-residue chain is 6-hydroxytryprostatin B O-methyltransferase (411 aa).

Residue aspartate 270 participates in S-adenosyl-L-methionine binding. Histidine 313 serves as the catalytic Proton acceptor.

It belongs to the class I-like SAM-binding methyltransferase superfamily. Cation-independent O-methyltransferase family. As to quaternary structure, homodimer.

It catalyses the reaction 6-hydroxytryprostatin B + S-adenosyl-L-methionine = tryprostatin A + S-adenosyl-L-homocysteine + H(+). It functions in the pathway alkaloid biosynthesis. Functionally, 6-hydroxytryprostatin B O-methyltransferase; part of the gene cluster that mediates the biosynthesis of fumitremorgins, indole alkaloids that carry not only intriguing chemical structures, but also interesting biological and pharmacological activities. The biosynthesis of fumitremorgin-type alkaloids begins by condensation of the two amino acids L-tryptophan and L-proline to brevianamide F, catalyzed by the non-ribosomal peptide synthetase ftmPS/ftmA. Brevianamide F is then prenylated by the prenyltransferase ftmPT1/ftmB in the presence of dimethylallyl diphosphate, resulting in the formation of tryprostatin B. The three cytochrome P450 monooxygenases, ftmP450-1/ftmC, ftmP450-2/ftmE and ftmP450-3/FtmG, are responsible for the conversion of tryprostatin B to 6-hydroxytryprostatin B, tryprostatin A to fumitremorgin C and fumitremorgin C to 12,13-dihydroxyfumitremorgin C, respectively. The putative methyltransferase ftmMT/ftmD is expected for the conversion of 6-hydroxytryprostatin B to tryprostatin A. FtmPT2/FtmH catalyzes the prenylation of 12,13-dihydroxyfumitre-morgin C in the presence of dimethylallyl diphosphate, resulting in the formation of fumitremorgin B. Fumitremorgin B is further converted to verruculogen by ftmOx1/ftmF via the insertion of an endoperoxide bond between the two prenyl moieties. Finally, verruculogen is further converted to fumitremorgin A by the verruculogen prenyltransferase ftmPT3. The protein is 6-hydroxytryprostatin B O-methyltransferase of Neosartorya fischeri (strain ATCC 1020 / DSM 3700 / CBS 544.65 / FGSC A1164 / JCM 1740 / NRRL 181 / WB 181) (Aspergillus fischerianus).